Consider the following 428-residue polypeptide: Enolase (428 aa).

Gln163 contacts (2R)-2-phosphoglycerate. Glu205 (proton donor) is an active-site residue. Mg(2+) contacts are provided by Asp242, Glu286, and Asp313. The (2R)-2-phosphoglycerate site is built by Lys338, Arg367, Ser368, and Lys389. Lys338 serves as the catalytic Proton acceptor.

The protein belongs to the enolase family. The cofactor is Mg(2+).

Its subcellular location is the cytoplasm. It is found in the secreted. The protein resides in the cell surface. The catalysed reaction is (2R)-2-phosphoglycerate = phosphoenolpyruvate + H2O. Its pathway is carbohydrate degradation; glycolysis; pyruvate from D-glyceraldehyde 3-phosphate: step 4/5. Functionally, catalyzes the reversible conversion of 2-phosphoglycerate (2-PG) into phosphoenolpyruvate (PEP). It is essential for the degradation of carbohydrates via glycolysis. In Acidovorax ebreus (strain TPSY) (Diaphorobacter sp. (strain TPSY)), this protein is Enolase.